The chain runs to 533 residues: Zinc finger protein 692 (533 aa).

Disordered stretches follow at residues 124–251 and 290–310; these read SLIP…PATL and TESL…TCDE. Residues 149-178 show a composition bias toward basic and acidic residues; that stretch reads EARRKQEAEGLECEHRERTQETRLSRRVEP. The span at 190–208 shows a compositional bias: acidic residues; it reads QVVEEEEEEEEEEEEEELL. Ser-233 bears the Phosphoserine mark. A compositionally biased stretch (polar residues) spans 290-305; the sequence is TESLDSPGSQAQSAPN. C2H2-type zinc fingers lie at residues 329-354, 360-384, 390-412, 418-440, and 449-472; these read MPCD…KYQH, FCCP…VKLH, YICE…RRIH, LQCE…RRKH, and FPCE…SKSH. Ser-471 is modified (phosphoserine). Residues 478–533 are disordered; the sequence is VQESPGSLGSSPSISAPEPLQSPEGTSFSTSYDSNPAPSTSISSPGVPAPRNTEKS. Residues 481–492 show a composition bias toward low complexity; it reads SPGSLGSSPSIS. Residues 500–521 are compositionally biased toward polar residues; it reads PEGTSFSTSYDSNPAPSTSISS.

Belongs to the krueppel C2H2-type zinc-finger protein family. In terms of processing, phosphorylation at Ser-471 results in loss of DNA-binding activity.

The protein resides in the nucleus. Its function is as follows. May act as an transcriptional repressor for PCK1 gene expression, in turns may participate in the hepatic gluconeogenesis regulation through the activated AMPK signaling pathway. This is Zinc finger protein 692 from Rattus norvegicus (Rat).